An 83-amino-acid chain; its full sequence is Large ribosomal subunit protein bL31B (83 aa).

This sequence belongs to the bacterial ribosomal protein bL31 family. Type B subfamily. In terms of assembly, part of the 50S ribosomal subunit.

Binds the 23S rRNA. In Lactobacillus delbrueckii subsp. bulgaricus (strain ATCC 11842 / DSM 20081 / BCRC 10696 / JCM 1002 / NBRC 13953 / NCIMB 11778 / NCTC 12712 / WDCM 00102 / Lb 14), this protein is Large ribosomal subunit protein bL31B.